We begin with the raw amino-acid sequence, 290 residues long: Light-independent protochlorophyllide reductase iron-sulfur ATP-binding protein (290 aa).

ATP-binding positions include 10–15 (GIGKST) and Lys39. Position 14 (Ser14) interacts with Mg(2+). [4Fe-4S] cluster is bound by residues Cys95 and Cys129. An ATP-binding site is contributed by 180–181 (NR).

It belongs to the NifH/BchL/ChlL family. Homodimer. Protochlorophyllide reductase is composed of three subunits; ChlL, ChlN and ChlB. Requires [4Fe-4S] cluster as cofactor.

The protein resides in the plastid. The protein localises to the chloroplast. It catalyses the reaction chlorophyllide a + oxidized 2[4Fe-4S]-[ferredoxin] + 2 ADP + 2 phosphate = protochlorophyllide a + reduced 2[4Fe-4S]-[ferredoxin] + 2 ATP + 2 H2O. The protein operates within porphyrin-containing compound metabolism; chlorophyll biosynthesis (light-independent). In terms of biological role, component of the dark-operative protochlorophyllide reductase (DPOR) that uses Mg-ATP and reduced ferredoxin to reduce ring D of protochlorophyllide (Pchlide) to form chlorophyllide a (Chlide). This reaction is light-independent. The L component serves as a unique electron donor to the NB-component of the complex, and binds Mg-ATP. In Anthoceros angustus (Hornwort), this protein is Light-independent protochlorophyllide reductase iron-sulfur ATP-binding protein.